The sequence spans 115 residues: U3-lycotoxin-Ls1a (115 aa).

The first 20 residues, 1-20 (MKFVLLFGVLLLTLFSYSSA), serve as a signal peptide directing secretion. Residues 21–44 (EMLDDFDQADEDELLSLIEKEEAR) constitute a propeptide that is removed on maturation. Cystine bridges form between Cys48–Cys63, Cys55–Cys72, Cys62–Cys87, and Cys74–Cys85.

The protein belongs to the neurotoxin 19 (CSTX) family. 01 subfamily. Expressed by the venom gland.

The protein resides in the secreted. The polypeptide is U3-lycotoxin-Ls1a (Lycosa singoriensis (Wolf spider)).